The primary structure comprises 217 residues: Thiamine-phosphate synthase (217 aa).

Residues 37-41 (QFREK) and Asn72 contribute to the 4-amino-2-methyl-5-(diphosphooxymethyl)pyrimidine site. Asp73 and Asp92 together coordinate Mg(2+). Ser110 contributes to the 4-amino-2-methyl-5-(diphosphooxymethyl)pyrimidine binding site. 136–138 (TVS) contributes to the 2-[(2R,5Z)-2-carboxy-4-methylthiazol-5(2H)-ylidene]ethyl phosphate binding site. Lys139 serves as a coordination point for 4-amino-2-methyl-5-(diphosphooxymethyl)pyrimidine. 2-[(2R,5Z)-2-carboxy-4-methylthiazol-5(2H)-ylidene]ethyl phosphate is bound by residues Gly168 and 188–189 (IS).

Belongs to the thiamine-phosphate synthase family. Mg(2+) serves as cofactor.

The enzyme catalyses 2-[(2R,5Z)-2-carboxy-4-methylthiazol-5(2H)-ylidene]ethyl phosphate + 4-amino-2-methyl-5-(diphosphooxymethyl)pyrimidine + 2 H(+) = thiamine phosphate + CO2 + diphosphate. It catalyses the reaction 2-(2-carboxy-4-methylthiazol-5-yl)ethyl phosphate + 4-amino-2-methyl-5-(diphosphooxymethyl)pyrimidine + 2 H(+) = thiamine phosphate + CO2 + diphosphate. The catalysed reaction is 4-methyl-5-(2-phosphooxyethyl)-thiazole + 4-amino-2-methyl-5-(diphosphooxymethyl)pyrimidine + H(+) = thiamine phosphate + diphosphate. It functions in the pathway cofactor biosynthesis; thiamine diphosphate biosynthesis; thiamine phosphate from 4-amino-2-methyl-5-diphosphomethylpyrimidine and 4-methyl-5-(2-phosphoethyl)-thiazole: step 1/1. Its function is as follows. Condenses 4-methyl-5-(beta-hydroxyethyl)thiazole monophosphate (THZ-P) and 2-methyl-4-amino-5-hydroxymethyl pyrimidine pyrophosphate (HMP-PP) to form thiamine monophosphate (TMP). The protein is Thiamine-phosphate synthase of Anoxybacillus flavithermus (strain DSM 21510 / WK1).